A 105-amino-acid polypeptide reads, in one-letter code: Cell division protein FtsL (105 aa).

Over 1–24 the chain is Cytoplasmic; that stretch reads MAEKMEKTGQILQMQLKRFSRVEK. A helical membrane pass occupies residues 25–45; the sequence is AFYFSIAVTTLIVAISIIFMQ. The Extracellular segment spans residues 46 to 105; sequence TKLLQVQNDLTKINAQIEEKKTELDDAKQEVNELLRAERLKEIANSHDLQLNNENIRIAE.

The protein belongs to the FtsL family.

Its subcellular location is the cell membrane. Its function is as follows. Essential cell division protein. The sequence is that of Cell division protein FtsL from Streptococcus pneumoniae (strain ATCC BAA-255 / R6).